A 436-amino-acid chain; its full sequence is Glutamyl-tRNA reductase (436 aa).

Substrate contacts are provided by residues 49 to 52, Ser-109, 114 to 116, and Gln-120; these read TCNR and EPQ. The Nucleophile role is filled by Cys-50. An NADP(+)-binding site is contributed by 189–194; it reads GAGEMC.

It belongs to the glutamyl-tRNA reductase family. In terms of assembly, homodimer.

The catalysed reaction is (S)-4-amino-5-oxopentanoate + tRNA(Glu) + NADP(+) = L-glutamyl-tRNA(Glu) + NADPH + H(+). It participates in porphyrin-containing compound metabolism; protoporphyrin-IX biosynthesis; 5-aminolevulinate from L-glutamyl-tRNA(Glu): step 1/2. Its function is as follows. Catalyzes the NADPH-dependent reduction of glutamyl-tRNA(Glu) to glutamate 1-semialdehyde (GSA). In Pelobacter propionicus (strain DSM 2379 / NBRC 103807 / OttBd1), this protein is Glutamyl-tRNA reductase.